A 317-amino-acid chain; its full sequence is UV DNA damage endonuclease (317 aa).

It belongs to the uve1/UvsE family.

Component in a DNA repair pathway. Removal of UV LIGHT damaged nucleotides. Recognizes pyrimidine dimers and cleave a phosphodiester bond immediately 5' to the lesion. In Bacillus mycoides (strain KBAB4) (Bacillus weihenstephanensis), this protein is UV DNA damage endonuclease.